Reading from the N-terminus, the 201-residue chain is Small ribosomal subunit protein uS4c (201 aa).

The disordered stretch occupies residues 20 to 43 (GLTSKRPRAGSDLRNQSRSGKRSQ). Positions 89-149 (MRLDNILFRL…NEQKSRALIQ (61 aa)) constitute an S4 RNA-binding domain.

Belongs to the universal ribosomal protein uS4 family. In terms of assembly, part of the 30S ribosomal subunit. Contacts protein S5. The interaction surface between S4 and S5 is involved in control of translational fidelity.

The protein localises to the plastid. Its subcellular location is the chloroplast. Functionally, one of the primary rRNA binding proteins, it binds directly to 16S rRNA where it nucleates assembly of the body of the 30S subunit. With S5 and S12 plays an important role in translational accuracy. This is Small ribosomal subunit protein uS4c (rps4) from Vitis vinifera (Grape).